The primary structure comprises 167 residues: SsrA-binding protein (167 aa).

Over residues 139-158 (QNHDKRDAAKDRDWQRDKQR) the composition is skewed to basic and acidic residues. The tract at residues 139–167 (QNHDKRDAAKDRDWQRDKQRVMRRHNRDA) is disordered.

It belongs to the SmpB family.

Its subcellular location is the cytoplasm. In terms of biological role, required for rescue of stalled ribosomes mediated by trans-translation. Binds to transfer-messenger RNA (tmRNA), required for stable association of tmRNA with ribosomes. tmRNA and SmpB together mimic tRNA shape, replacing the anticodon stem-loop with SmpB. tmRNA is encoded by the ssrA gene; the 2 termini fold to resemble tRNA(Ala) and it encodes a 'tag peptide', a short internal open reading frame. During trans-translation Ala-aminoacylated tmRNA acts like a tRNA, entering the A-site of stalled ribosomes, displacing the stalled mRNA. The ribosome then switches to translate the ORF on the tmRNA; the nascent peptide is terminated with the 'tag peptide' encoded by the tmRNA and targeted for degradation. The ribosome is freed to recommence translation, which seems to be the essential function of trans-translation. This Xanthomonas euvesicatoria pv. vesicatoria (strain 85-10) (Xanthomonas campestris pv. vesicatoria) protein is SsrA-binding protein.